Here is a 245-residue protein sequence, read N- to C-terminus: Biosynthetic peptidoglycan transglycosylase (245 aa).

The helical transmembrane segment at 10 to 30 (FLALLFVVATLAQLWYLGQVL) threads the bilayer. The interval 224–245 (DPGTVPLPPPPEPTAPPEGNTQ) is disordered. Residues 226–239 (GTVPLPPPPEPTAP) are compositionally biased toward pro residues.

The protein belongs to the glycosyltransferase 51 family.

It is found in the cell inner membrane. It catalyses the reaction [GlcNAc-(1-&gt;4)-Mur2Ac(oyl-L-Ala-gamma-D-Glu-L-Lys-D-Ala-D-Ala)](n)-di-trans,octa-cis-undecaprenyl diphosphate + beta-D-GlcNAc-(1-&gt;4)-Mur2Ac(oyl-L-Ala-gamma-D-Glu-L-Lys-D-Ala-D-Ala)-di-trans,octa-cis-undecaprenyl diphosphate = [GlcNAc-(1-&gt;4)-Mur2Ac(oyl-L-Ala-gamma-D-Glu-L-Lys-D-Ala-D-Ala)](n+1)-di-trans,octa-cis-undecaprenyl diphosphate + di-trans,octa-cis-undecaprenyl diphosphate + H(+). It functions in the pathway cell wall biogenesis; peptidoglycan biosynthesis. Its function is as follows. Peptidoglycan polymerase that catalyzes glycan chain elongation from lipid-linked precursors. The polypeptide is Biosynthetic peptidoglycan transglycosylase (Alcanivorax borkumensis (strain ATCC 700651 / DSM 11573 / NCIMB 13689 / SK2)).